The sequence spans 252 residues: Uridylate kinase (252 aa).

Position 27 to 30 (27 to 30 (KLGG)) interacts with ATP. Gly-68 is a binding site for UMP. ATP-binding residues include Gly-69 and Arg-73. Residues Asp-88 and 149 to 156 (MGLPYFST) contribute to the UMP site. ATP is bound by residues Tyr-182 and Asp-185.

It belongs to the UMP kinase family. In terms of assembly, homohexamer.

Its subcellular location is the cytoplasm. It catalyses the reaction UMP + ATP = UDP + ADP. The protein operates within pyrimidine metabolism; CTP biosynthesis via de novo pathway; UDP from UMP (UMPK route): step 1/1. Its activity is regulated as follows. Inhibited by UTP. Catalyzes the reversible phosphorylation of UMP to UDP. This chain is Uridylate kinase, found in Mycobacterium sp. (strain JLS).